An 857-amino-acid chain; its full sequence is Leucine--tRNA ligase (857 aa).

Positions 42–52 (PYPSGTLHMGH) match the 'HIGH' region motif. Positions 616–620 (KMSKS) match the 'KMSKS' region motif. Lys619 provides a ligand contact to ATP.

Belongs to the class-I aminoacyl-tRNA synthetase family.

It localises to the cytoplasm. It carries out the reaction tRNA(Leu) + L-leucine + ATP = L-leucyl-tRNA(Leu) + AMP + diphosphate. This is Leucine--tRNA ligase from Parasynechococcus marenigrum (strain WH8102).